The sequence spans 320 residues: Lipoyl synthase (320 aa).

Residues 1 to 26 (MVTVVDRVTSRRLRHPEKMHRPDTSI) form a disordered region. [4Fe-4S] cluster-binding residues include C59, C64, C70, C85, C89, C92, and S298. The region spanning 71 to 287 (WSQRHASFMI…AKIGKVKGFL (217 aa)) is the Radical SAM core domain.

Belongs to the radical SAM superfamily. Lipoyl synthase family. The cofactor is [4Fe-4S] cluster.

It is found in the cytoplasm. It catalyses the reaction [[Fe-S] cluster scaffold protein carrying a second [4Fe-4S](2+) cluster] + N(6)-octanoyl-L-lysyl-[protein] + 2 oxidized [2Fe-2S]-[ferredoxin] + 2 S-adenosyl-L-methionine + 4 H(+) = [[Fe-S] cluster scaffold protein] + N(6)-[(R)-dihydrolipoyl]-L-lysyl-[protein] + 4 Fe(3+) + 2 hydrogen sulfide + 2 5'-deoxyadenosine + 2 L-methionine + 2 reduced [2Fe-2S]-[ferredoxin]. It participates in protein modification; protein lipoylation via endogenous pathway; protein N(6)-(lipoyl)lysine from octanoyl-[acyl-carrier-protein]: step 2/2. Its function is as follows. Catalyzes the radical-mediated insertion of two sulfur atoms into the C-6 and C-8 positions of the octanoyl moiety bound to the lipoyl domains of lipoate-dependent enzymes, thereby converting the octanoylated domains into lipoylated derivatives. The sequence is that of Lipoyl synthase from Bartonella quintana (strain Toulouse) (Rochalimaea quintana).